A 70-amino-acid polypeptide reads, in one-letter code: Bowman-Birk type proteinase inhibitor A-II (70 aa).

7 disulfides stabilise this stretch: Cys-11/Cys-68, Cys-12/Cys-29, Cys-15/Cys-63, Cys-17/Cys-27, Cys-36/Cys-43, Cys-40/Cys-55, and Cys-45/Cys-53.

This sequence belongs to the Bowman-Birk serine protease inhibitor family.

Functionally, these proteins inhibit trypsin and chymotrypsin, having 2 sites of interaction with trypsin. The site of interaction with chymotrypsin has not been determined but is not independent of the trypsin-reactive sites. The polypeptide is Bowman-Birk type proteinase inhibitor A-II (Arachis hypogaea (Peanut)).